Consider the following 507-residue polypeptide: Probable Xaa-Pro aminopeptidase TRV_02643 (507 aa).

The Mn(2+) site is built by D275, D286, E434, and E478.

This sequence belongs to the peptidase M24B family. Requires Mn(2+) as cofactor.

The enzyme catalyses Release of any N-terminal amino acid, including proline, that is linked to proline, even from a dipeptide or tripeptide.. Its function is as follows. Catalyzes the removal of a penultimate prolyl residue from the N-termini of peptides. The protein is Probable Xaa-Pro aminopeptidase TRV_02643 of Trichophyton verrucosum (strain HKI 0517).